The chain runs to 82 residues: Small ribosomal subunit protein bS16 (82 aa).

The protein belongs to the bacterial ribosomal protein bS16 family.

The polypeptide is Small ribosomal subunit protein bS16 (Dehalococcoides mccartyi (strain ATCC BAA-2100 / JCM 16839 / KCTC 5957 / BAV1)).